The chain runs to 164 residues: Large ribosomal subunit protein bL21 (164 aa).

The segment at 105–164 (KAPTIGPRAKKEKKVEAAPADGEAPAKKAPAKKAAAKKAAPKAAAKKAPAKKAAPKAKSE) is disordered. Residues 133 to 164 (APAKKAAAKKAAPKAAAKKAPAKKAAPKAKSE) are compositionally biased toward basic residues.

The protein belongs to the bacterial ribosomal protein bL21 family. In terms of assembly, part of the 50S ribosomal subunit. Contacts protein L20.

Functionally, this protein binds to 23S rRNA in the presence of protein L20. This is Large ribosomal subunit protein bL21 from Afipia carboxidovorans (strain ATCC 49405 / DSM 1227 / KCTC 32145 / OM5) (Oligotropha carboxidovorans).